We begin with the raw amino-acid sequence, 369 residues long: Phospho-N-acetylmuramoyl-pentapeptide-transferase (369 aa).

A run of 10 helical transmembrane segments spans residues 30 to 50 (LAIF…IRWM), 74 to 94 (GTPT…TLLW), 97 to 117 (LSNP…LLGF), 136 to 156 (IRLA…IVFA), 177 to 197 (YFVD…VGAA), 208 to 228 (GLAT…AYLV), 244 to 264 (GVGE…GFLW), 272 to 292 (IFMG…VAVA), 297 to 317 (IVLA…IIQV), and 346 to 366 (TVVI…LATL).

Belongs to the glycosyltransferase 4 family. MraY subfamily. It depends on Mg(2+) as a cofactor.

The protein localises to the cell inner membrane. It catalyses the reaction UDP-N-acetyl-alpha-D-muramoyl-L-alanyl-gamma-D-glutamyl-meso-2,6-diaminopimeloyl-D-alanyl-D-alanine + di-trans,octa-cis-undecaprenyl phosphate = di-trans,octa-cis-undecaprenyl diphospho-N-acetyl-alpha-D-muramoyl-L-alanyl-D-glutamyl-meso-2,6-diaminopimeloyl-D-alanyl-D-alanine + UMP. Its pathway is cell wall biogenesis; peptidoglycan biosynthesis. Its function is as follows. Catalyzes the initial step of the lipid cycle reactions in the biosynthesis of the cell wall peptidoglycan: transfers peptidoglycan precursor phospho-MurNAc-pentapeptide from UDP-MurNAc-pentapeptide onto the lipid carrier undecaprenyl phosphate, yielding undecaprenyl-pyrophosphoryl-MurNAc-pentapeptide, known as lipid I. This chain is Phospho-N-acetylmuramoyl-pentapeptide-transferase, found in Phenylobacterium zucineum (strain HLK1).